The chain runs to 873 residues: Outer membrane usher protein FimC (873 aa).

Residues 1–15 form the signal peptide; that stretch reads MKQIPLILAMSLAFA. Cysteines 815 and 838 form a disulfide.

It belongs to the fimbrial export usher family.

It localises to the cell outer membrane. Functionally, probable porin-like protein necessary for the assembly of a pilin-type protein. This is Outer membrane usher protein FimC (fimC) from Bordetella pertussis (strain Tohama I / ATCC BAA-589 / NCTC 13251).